The following is a 107-amino-acid chain: Iron-sulfur cluster assembly protein CyaY (107 aa).

This sequence belongs to the frataxin family.

Its function is as follows. Involved in iron-sulfur (Fe-S) cluster assembly. May act as a regulator of Fe-S biogenesis. The protein is Iron-sulfur cluster assembly protein CyaY of Neisseria meningitidis serogroup C / serotype 2a (strain ATCC 700532 / DSM 15464 / FAM18).